The chain runs to 159 residues: uncharacterized protein (159 aa).

This is an uncharacterized protein from Methanocaldococcus jannaschii (strain ATCC 43067 / DSM 2661 / JAL-1 / JCM 10045 / NBRC 100440) (Methanococcus jannaschii).